Reading from the N-terminus, the 321-residue chain is UPF0676 protein C1494.01 (321 aa).

Positions 159–267 constitute a Fe2OG dioxygenase domain; the sequence is EEDVLRLLKY…RQTIAYFVTP (109 aa).

The protein belongs to the UPF0676 family.

Its subcellular location is the cytoplasm. The protein localises to the nucleus. The polypeptide is UPF0676 protein C1494.01 (Schizosaccharomyces pombe (strain 972 / ATCC 24843) (Fission yeast)).